The sequence spans 218 residues: N-(5'-phosphoribosyl)anthranilate isomerase (218 aa).

Belongs to the TrpF family.

It catalyses the reaction N-(5-phospho-beta-D-ribosyl)anthranilate = 1-(2-carboxyphenylamino)-1-deoxy-D-ribulose 5-phosphate. It functions in the pathway amino-acid biosynthesis; L-tryptophan biosynthesis; L-tryptophan from chorismate: step 3/5. This chain is N-(5'-phosphoribosyl)anthranilate isomerase, found in Rhodopseudomonas palustris (strain BisA53).